We begin with the raw amino-acid sequence, 652 residues long: Chaperone protein HtpG (652 aa).

Residues 1-351 (MTEHVEQLEF…AQDLSLNVSR (351 aa)) are a; substrate-binding. A b region spans residues 352–568 (EILQQDRQIQ…VFDFTPMLER (217 aa)). The interval 569–652 (MYRASGQPVP…ILTDRLTRTL (84 aa)) is c.

Belongs to the heat shock protein 90 family. In terms of assembly, homodimer.

It is found in the cytoplasm. In terms of biological role, molecular chaperone. Has ATPase activity. The sequence is that of Chaperone protein HtpG from Nocardia farcinica (strain IFM 10152).